The sequence spans 142 residues: Large ribosomal subunit protein uL11 (142 aa).

Belongs to the universal ribosomal protein uL11 family. As to quaternary structure, part of the ribosomal stalk of the 50S ribosomal subunit. Interacts with L10 and the large rRNA to form the base of the stalk. L10 forms an elongated spine to which L12 dimers bind in a sequential fashion forming a multimeric L10(L12)X complex. In terms of processing, one or more lysine residues are methylated.

Its function is as follows. Forms part of the ribosomal stalk which helps the ribosome interact with GTP-bound translation factors. This chain is Large ribosomal subunit protein uL11, found in Yersinia pseudotuberculosis serotype O:1b (strain IP 31758).